A 424-amino-acid chain; its full sequence is MLDLNFVVQNLPSVIAKLEKRQQNFAYLNKLPLLAQQRKSLLLEIQDLRSQKNQSAKKVAQKANAKEDITLVLQDTNFLRDDLQKLEQKLKLKEQEIFDILSITPNLPHDSLPIGTNDKDNKELYCAGQIRTFAFTPKDHVYLAEKLDILDFKRASKISGSGFVVCKGLGARLERALIQFMMDLHNKKGYQEIIPPYIINEKSMFATGQLPKFEDEVYKLYNSKNNWYLNPTAEVPTINLHREEIFKPDTLPIKYVAYTTAFRQEAGSAGKDTRGIFRQHQFNKVELIQFCHPQNSYECLDQMLKDSEEVLKLLKLPYRVVLLSTGDLGFSMAKTYDLEVFLPSYNCYREIGSISNSCDFQARRANIKMKNPANNKNEYVHILNGSGLAVGRTVIAILENYQNQDGTITVPEVLQPYLGTDIIK.

232-234 (TAE) provides a ligand contact to L-serine. 263–265 (RQE) contributes to the ATP binding site. Glu-286 provides a ligand contact to L-serine. 350–353 (EIGS) serves as a coordination point for ATP. Ser-386 contacts L-serine.

The protein belongs to the class-II aminoacyl-tRNA synthetase family. Type-1 seryl-tRNA synthetase subfamily. In terms of assembly, homodimer. The tRNA molecule binds across the dimer.

It is found in the cytoplasm. The catalysed reaction is tRNA(Ser) + L-serine + ATP = L-seryl-tRNA(Ser) + AMP + diphosphate + H(+). It carries out the reaction tRNA(Sec) + L-serine + ATP = L-seryl-tRNA(Sec) + AMP + diphosphate + H(+). The protein operates within aminoacyl-tRNA biosynthesis; selenocysteinyl-tRNA(Sec) biosynthesis; L-seryl-tRNA(Sec) from L-serine and tRNA(Sec): step 1/1. Its function is as follows. Catalyzes the attachment of serine to tRNA(Ser). Is also able to aminoacylate tRNA(Sec) with serine, to form the misacylated tRNA L-seryl-tRNA(Sec), which will be further converted into selenocysteinyl-tRNA(Sec). The polypeptide is Serine--tRNA ligase (Onion yellows phytoplasma (strain OY-M)).